Consider the following 139-residue polypeptide: Phosphoribosyl-AMP cyclohydrolase (139 aa).

Asp95 contributes to the Mg(2+) binding site. Cys96 is a binding site for Zn(2+). Positions 97 and 99 each coordinate Mg(2+). Zn(2+) is bound by residues Cys114 and Cys121.

The protein belongs to the PRA-CH family. Homodimer. Mg(2+) serves as cofactor. The cofactor is Zn(2+).

Its subcellular location is the cytoplasm. It carries out the reaction 1-(5-phospho-beta-D-ribosyl)-5'-AMP + H2O = 1-(5-phospho-beta-D-ribosyl)-5-[(5-phospho-beta-D-ribosylamino)methylideneamino]imidazole-4-carboxamide. It participates in amino-acid biosynthesis; L-histidine biosynthesis; L-histidine from 5-phospho-alpha-D-ribose 1-diphosphate: step 3/9. Catalyzes the hydrolysis of the adenine ring of phosphoribosyl-AMP. This is Phosphoribosyl-AMP cyclohydrolase from Chelativorans sp. (strain BNC1).